A 273-amino-acid polypeptide reads, in one-letter code: Dermonecrotic toxin LdSicTox-alphaIB3aiii (273 aa).

Residue His5 is part of the active site. Glu25 and Asp27 together coordinate Mg(2+). The active-site Nucleophile is the His41. 2 disulfide bridges follow: Cys45–Cys51 and Cys47–Cys190. Asp85 provides a ligand contact to Mg(2+).

Belongs to the arthropod phospholipase D family. Class II subfamily. Requires Mg(2+) as cofactor. In terms of tissue distribution, expressed by the venom gland.

It localises to the secreted. It catalyses the reaction an N-(acyl)-sphingosylphosphocholine = an N-(acyl)-sphingosyl-1,3-cyclic phosphate + choline. The catalysed reaction is an N-(acyl)-sphingosylphosphoethanolamine = an N-(acyl)-sphingosyl-1,3-cyclic phosphate + ethanolamine. The enzyme catalyses a 1-acyl-sn-glycero-3-phosphocholine = a 1-acyl-sn-glycero-2,3-cyclic phosphate + choline. It carries out the reaction a 1-acyl-sn-glycero-3-phosphoethanolamine = a 1-acyl-sn-glycero-2,3-cyclic phosphate + ethanolamine. Dermonecrotic toxins cleave the phosphodiester linkage between the phosphate and headgroup of certain phospholipids (sphingolipid and lysolipid substrates), forming an alcohol (often choline) and a cyclic phosphate. This toxin acts on sphingomyelin (SM). It may also act on ceramide phosphoethanolamine (CPE), lysophosphatidylcholine (LPC) and lysophosphatidylethanolamine (LPE), but not on lysophosphatidylserine (LPS), and lysophosphatidylglycerol (LPG). It acts by transphosphatidylation, releasing exclusively cyclic phosphate products as second products. Induces dermonecrosis, hemolysis, increased vascular permeability, edema, inflammatory response, and platelet aggregation. The protein is Dermonecrotic toxin LdSicTox-alphaIB3aiii of Loxosceles deserta (Desert recluse spider).